A 332-amino-acid polypeptide reads, in one-letter code: Large ribosomal subunit protein mL44 (332 aa).

Residues 1-30 (MASGLTRLLLRGPRCLLATAGLTLIPPVRG) constitute a mitochondrion transit peptide. The 143-residue stretch at 86–228 (DLLKTAFVNS…LITQMTGKEL (143 aa)) folds into the RNase III domain. One can recognise a DRBM domain in the interval 236–306 (NPMGLLVQEL…ARVALRKLYG (71 aa)).

It belongs to the ribonuclease III family. Mitochondrion-specific ribosomal protein mL44 subfamily. As to quaternary structure, component of the mitochondrial ribosome large subunit (39S) which comprises a 16S rRNA and about 50 distinct proteins.

It localises to the mitochondrion. Functionally, component of the 39S subunit of mitochondrial ribosome. May have a function in the assembly/stability of nascent mitochondrial polypeptides exiting the ribosome. In Bos taurus (Bovine), this protein is Large ribosomal subunit protein mL44 (MRPL44).